The chain runs to 1199 residues: DNA-directed RNA polymerase subunit beta' (1199 aa).

Residues cysteine 60, cysteine 62, cysteine 75, and cysteine 78 each contribute to the Zn(2+) site. 3 residues coordinate Mg(2+): aspartate 449, aspartate 451, and aspartate 453. Residues cysteine 818, cysteine 892, cysteine 899, and cysteine 902 each contribute to the Zn(2+) site.

Belongs to the RNA polymerase beta' chain family. The RNAP catalytic core consists of 2 alpha, 1 beta, 1 beta' and 1 omega subunit. When a sigma factor is associated with the core the holoenzyme is formed, which can initiate transcription. Mg(2+) serves as cofactor. Zn(2+) is required as a cofactor.

The catalysed reaction is RNA(n) + a ribonucleoside 5'-triphosphate = RNA(n+1) + diphosphate. Functionally, DNA-dependent RNA polymerase catalyzes the transcription of DNA into RNA using the four ribonucleoside triphosphates as substrates. This chain is DNA-directed RNA polymerase subunit beta', found in Geobacillus kaustophilus (strain HTA426).